A 222-amino-acid polypeptide reads, in one-letter code: Eukaryotic translation initiation factor 3 subunit K (222 aa).

The PCI domain occupies 46–208; sequence YDLEANLAVL…KIKTKNITEK (163 aa).

This sequence belongs to the eIF-3 subunit K family. Component of the eukaryotic translation initiation factor 3 (eIF-3) complex. The eIF-3 complex interacts with pix.

The protein localises to the cytoplasm. Functionally, component of the eukaryotic translation initiation factor 3 (eIF-3) complex, which is involved in protein synthesis of a specialized repertoire of mRNAs and, together with other initiation factors, stimulates binding of mRNA and methionyl-tRNAi to the 40S ribosome. The eIF-3 complex specifically targets and initiates translation of a subset of mRNAs involved in cell proliferation. The chain is Eukaryotic translation initiation factor 3 subunit K from Drosophila sechellia (Fruit fly).